A 727-amino-acid chain; its full sequence is Probable metal-nicotianamine transporter YSL14 (727 aa).

Low complexity-rich tracts occupy residues 1–10 (MAQHTAAAAG) and 18–27 (AEAAAAAAAG). Residues 1–61 (MAQHTAAAAG…RNGGADDPDA (61 aa)) are disordered. Positions 45-54 (AGGGGGGRNG) are enriched in gly residues. A run of 14 helical transmembrane segments spans residues 84–104 (AFVV…KLNL), 107–127 (GIIP…VRLW), 152–172 (CVVS…LFGM), 194–214 (LGWM…ALVP), 256–276 (LGKY…YTAG), 314–334 (IVNV…WPLI), 359–379 (VFIS…KVLI), 432–452 (VAYG…PEIF), 460–480 (ILVA…GSGL), 492–512 (LAIF…LVGL), 546–566 (FISQ…VFWL), 604–624 (PENC…INLI), 646–666 (FYIG…LFVW), and 681–701 (VASG…ILAL).

The protein belongs to the YSL (TC 2.A.67.2) family. In terms of tissue distribution, expressed in leaves and at low levels in roots.

The protein resides in the membrane. Functionally, may be involved in the transport of nicotianamine-chelated metals. This Oryza sativa subsp. japonica (Rice) protein is Probable metal-nicotianamine transporter YSL14 (YSL14).